The sequence spans 374 residues: Chaperone protein DnaJ (374 aa).

The region spanning 5–70 (DYYEVLGLEK…DKKANYDRFG (66 aa)) is the J domain. Residues 137 to 219 (GVEKSINITR…CHGAGHVRKK (83 aa)) form a CR-type zinc finger. 8 residues coordinate Zn(2+): C150, C153, C167, C170, C193, C196, C207, and C210. CXXCXGXG motif repeat units lie at residues 150 to 157 (CETCGGTG), 167 to 174 (CDKCGGTG), 193 to 200 (CDKCGGRG), and 207 to 214 (CHECHGAG).

The protein belongs to the DnaJ family. As to quaternary structure, homodimer. Zn(2+) is required as a cofactor.

The protein resides in the cytoplasm. Functionally, participates actively in the response to hyperosmotic and heat shock by preventing the aggregation of stress-denatured proteins and by disaggregating proteins, also in an autonomous, DnaK-independent fashion. Unfolded proteins bind initially to DnaJ; upon interaction with the DnaJ-bound protein, DnaK hydrolyzes its bound ATP, resulting in the formation of a stable complex. GrpE releases ADP from DnaK; ATP binding to DnaK triggers the release of the substrate protein, thus completing the reaction cycle. Several rounds of ATP-dependent interactions between DnaJ, DnaK and GrpE are required for fully efficient folding. Also involved, together with DnaK and GrpE, in the DNA replication of plasmids through activation of initiation proteins. This Clostridium acetobutylicum (strain ATCC 824 / DSM 792 / JCM 1419 / IAM 19013 / LMG 5710 / NBRC 13948 / NRRL B-527 / VKM B-1787 / 2291 / W) protein is Chaperone protein DnaJ.